Here is a 586-residue protein sequence, read N- to C-terminus: A-type ATP synthase subunit A (586 aa).

An ATP-binding site is contributed by 232-239 (GPFGSGKT).

It belongs to the ATPase alpha/beta chains family. As to quaternary structure, has multiple subunits with at least A(3), B(3), C, D, E, F, H, I and proteolipid K(x).

It is found in the cell membrane. It catalyses the reaction ATP + H2O + 4 H(+)(in) = ADP + phosphate + 5 H(+)(out). Component of the A-type ATP synthase that produces ATP from ADP in the presence of a proton gradient across the membrane. The A chain is the catalytic subunit. The sequence is that of A-type ATP synthase subunit A from Methanococcus maripaludis (strain C7 / ATCC BAA-1331).